A 220-amino-acid polypeptide reads, in one-letter code: MKGIFLVLEGIDGCGKSTQIEHLAQWLPLSGLMPSAAKLFITREPGGTRLGKSLRQLLLGTSPTDESPKPLTELLLYAADRAQHVSQVIQPKINNGDWVISDRFSSSTLAYQGFGRRLDKSLIKELENIATQGITPDLTFLLEIPVSESIKRRENTRKDRIESEGEIFLKRVSDGFSYIAKNDNWLVIPANQKKDIVSKQIENKLINYFQNISSLKNERS.

An ATP-binding site is contributed by 10–17; that stretch reads GIDGCGKS.

Belongs to the thymidylate kinase family.

It carries out the reaction dTMP + ATP = dTDP + ADP. Phosphorylation of dTMP to form dTDP in both de novo and salvage pathways of dTTP synthesis. This Prochlorococcus marinus (strain SARG / CCMP1375 / SS120) protein is Thymidylate kinase.